Reading from the N-terminus, the 352-residue chain is Transcription factor MYB51 (352 aa).

HTH myb-type domains follow at residues 10–62 and 63–117; these read ELGL…ANYL and RPDI…KKRL. DNA-binding regions (H-T-H motif) lie at residues 38–62 and 90–113; these read WRTLPEKAGLKRCGKSCRLRWANYL and WSAIARGLPGRTDNEIKNYWNTHI. Disordered stretches follow at residues 128 to 157 and 198 to 219; these read KGITSGTDKSENLPEKQNVNLTTSDHDLDN and GGPLASTSHTTNTTTTSVSVDS. Over residues 203–219 the composition is skewed to low complexity; the sequence is STSHTTNTTTTSVSVDS.

As to quaternary structure, can form complexes with MYC2, MYC3 or MYC4. As to expression, expressed in vegetative parts of the plant, mainly in mature rosette leaves and in trichomes. Detected in roots, but not in mature flowers or siliques.

The protein localises to the nucleus. Its function is as follows. Transcription factor positively regulating indolic glucosinolate biosynthetic pathway genes. The protein is Transcription factor MYB51 (MYB51) of Arabidopsis thaliana (Mouse-ear cress).